The chain runs to 124 residues: Small ribosomal subunit protein uS12 (124 aa).

Residues 1–32 are disordered; that stretch reads MPTINQLVRKGRRDKTAKVKTAALKGSPQRRG. Aspartate 89 carries the post-translational modification 3-methylthioaspartic acid. Residues 104 to 124 form a disordered region; sequence TQGVKGRKQARSRYGAKKEKS. Positions 108–118 are enriched in basic residues; it reads KGRKQARSRYG.

This sequence belongs to the universal ribosomal protein uS12 family. As to quaternary structure, part of the 30S ribosomal subunit. Contacts proteins S8 and S17. May interact with IF1 in the 30S initiation complex.

Its function is as follows. With S4 and S5 plays an important role in translational accuracy. Interacts with and stabilizes bases of the 16S rRNA that are involved in tRNA selection in the A site and with the mRNA backbone. Located at the interface of the 30S and 50S subunits, it traverses the body of the 30S subunit contacting proteins on the other side and probably holding the rRNA structure together. The combined cluster of proteins S8, S12 and S17 appears to hold together the shoulder and platform of the 30S subunit. In Rhodococcus erythropolis (strain PR4 / NBRC 100887), this protein is Small ribosomal subunit protein uS12.